The sequence spans 243 residues: Type III pantothenate kinase (243 aa).

ATP is bound at residue 7–14; the sequence is DLGNSRFK. Substrate is bound by residues tyrosine 91 and 98-101; that span reads GVDR. Catalysis depends on aspartate 100, which acts as the Proton acceptor. An ATP-binding site is contributed by threonine 122. Threonine 172 contacts substrate.

Belongs to the type III pantothenate kinase family. Homodimer. It depends on NH4(+) as a cofactor. K(+) is required as a cofactor.

The protein localises to the cytoplasm. It catalyses the reaction (R)-pantothenate + ATP = (R)-4'-phosphopantothenate + ADP + H(+). It participates in cofactor biosynthesis; coenzyme A biosynthesis; CoA from (R)-pantothenate: step 1/5. Catalyzes the phosphorylation of pantothenate (Pan), the first step in CoA biosynthesis. The protein is Type III pantothenate kinase of Stenotrophomonas maltophilia (strain R551-3).